The chain runs to 485 residues: Inosine-5'-monophosphate dehydrogenase (485 aa).

2 consecutive CBS domains span residues 95 to 154 (VITN…IDDV) and 155 to 215 (MTKE…AKDS). NAD(+) contacts are provided by residues D249 and 299 to 301 (GIG). Residues G301 and G303 each coordinate K(+). S304 lines the IMP pocket. C306 is a binding site for K(+). C306 (thioimidate intermediate) is an active-site residue. Residues 339 to 341 (DGG), 362 to 363 (GS), and 386 to 390 (YRGMG) contribute to the IMP site. The Proton acceptor role is filled by R402. E414 is a binding site for IMP. 3 residues coordinate K(+): E468, S469, and H470.

It belongs to the IMPDH/GMPR family. As to quaternary structure, homotetramer. It depends on K(+) as a cofactor.

It carries out the reaction IMP + NAD(+) + H2O = XMP + NADH + H(+). The protein operates within purine metabolism; XMP biosynthesis via de novo pathway; XMP from IMP: step 1/1. Mycophenolic acid (MPA) is a non-competitive inhibitor that prevents formation of the closed enzyme conformation by binding to the same site as the amobile flap. In contrast, mizoribine monophosphate (MZP) is a competitive inhibitor that induces the closed conformation. MPA is a potent inhibitor of mammalian IMPDHs but a poor inhibitor of the bacterial enzymes. MZP is a more potent inhibitor of bacterial IMPDH. Functionally, catalyzes the conversion of inosine 5'-phosphate (IMP) to xanthosine 5'-phosphate (XMP), the first committed and rate-limiting step in the de novo synthesis of guanine nucleotides, and therefore plays an important role in the regulation of cell growth. This Halalkalibacterium halodurans (strain ATCC BAA-125 / DSM 18197 / FERM 7344 / JCM 9153 / C-125) (Bacillus halodurans) protein is Inosine-5'-monophosphate dehydrogenase.